A 148-amino-acid chain; its full sequence is MTDKEQVVIYTDGACKGNPGRGGWGALLLYKGAERELWGGEPDTTNNRMELMAAIQALAALKRSCPIRLVTDSEYVMRGITEWLPNWKKRGWKTASKQPVKNADLWQALDEQVARHQVEWQWVRGHTGDPGNERADQLANRGVAELPR.

The RNase H type-1 domain maps to 3-144 (DKEQVVIYTD…ADQLANRGVA (142 aa)). 4 residues coordinate Mg(2+): Asp12, Glu50, Asp72, and Asp136. Positions 125 to 148 (GHTGDPGNERADQLANRGVAELPR) are disordered.

The protein belongs to the RNase H family. As to quaternary structure, monomer. The cofactor is Mg(2+).

Its subcellular location is the cytoplasm. It catalyses the reaction Endonucleolytic cleavage to 5'-phosphomonoester.. Functionally, endonuclease that specifically degrades the RNA of RNA-DNA hybrids. This chain is Ribonuclease H, found in Pseudomonas paraeruginosa (strain DSM 24068 / PA7) (Pseudomonas aeruginosa (strain PA7)).